Consider the following 917-residue polypeptide: Methionine--tRNA ligase, cytoplasmic (917 aa).

Residues 44–54 carry the 'HIGH' region motif; it reads PYVNNVPHLGN. The short motif at 367 to 371 is the 'KMSKS' region element; the sequence is KFSKS. Residue lysine 370 participates in ATP binding. Disordered regions lie at residues 591–623 and 702–749; these read GSQD…GDKK and SCTP…AAAA. Residues 614–623 are compositionally biased toward basic and acidic residues; it reads PTKDKKGDKK. The span at 702 to 713 shows a compositional bias: low complexity; sequence SCTPTPTSTPAS. Residues 732–741 are compositionally biased toward basic and acidic residues; the sequence is EPKKAKEQKK. Positions 756-857 constitute a tRNA-binding domain; it reads DVGRLDMRVG…ADSKPGTPVV (102 aa).

This sequence belongs to the class-I aminoacyl-tRNA synthetase family.

The protein resides in the cytoplasm. The catalysed reaction is tRNA(Met) + L-methionine + ATP = L-methionyl-tRNA(Met) + AMP + diphosphate. The protein is Methionine--tRNA ligase, cytoplasmic of Caenorhabditis elegans.